The chain runs to 362 residues: Phosphoserine aminotransferase (362 aa).

2 residues coordinate L-glutamate: serine 9 and arginine 42. Pyridoxal 5'-phosphate is bound by residues 76–77, tryptophan 102, threonine 153, aspartate 174, and glutamine 197; that span reads GR. N6-(pyridoxal phosphate)lysine is present on lysine 198. 239–240 contributes to the pyridoxal 5'-phosphate binding site; the sequence is NT.

This sequence belongs to the class-V pyridoxal-phosphate-dependent aminotransferase family. SerC subfamily. As to quaternary structure, homodimer. It depends on pyridoxal 5'-phosphate as a cofactor.

The protein resides in the cytoplasm. It carries out the reaction O-phospho-L-serine + 2-oxoglutarate = 3-phosphooxypyruvate + L-glutamate. The enzyme catalyses 4-(phosphooxy)-L-threonine + 2-oxoglutarate = (R)-3-hydroxy-2-oxo-4-phosphooxybutanoate + L-glutamate. It participates in amino-acid biosynthesis; L-serine biosynthesis; L-serine from 3-phospho-D-glycerate: step 2/3. The protein operates within cofactor biosynthesis; pyridoxine 5'-phosphate biosynthesis; pyridoxine 5'-phosphate from D-erythrose 4-phosphate: step 3/5. In terms of biological role, catalyzes the reversible conversion of 3-phosphohydroxypyruvate to phosphoserine and of 3-hydroxy-2-oxo-4-phosphonooxybutanoate to phosphohydroxythreonine. The sequence is that of Phosphoserine aminotransferase from Enterobacter sp. (strain 638).